Here is a 317-residue protein sequence, read N- to C-terminus: Apolipoprotein E (317 aa).

Positions 1–18 (MKVLWAALLVTFLAGCQA) are cleaved as a signal peptide. Repeat copies occupy residues 80–101 (TLMDETMKELKAYKSELEEQLS), 102–123 (PVAEETRARLSKELQAAQARLG), 124–145 (ADMEDVRSRLVQYRSEVQAMLG), 146–167 (QSTEELRARLASHLRKLRKRLL), 168–189 (RDADDLQKRLAVYQAGAREGAE), 190–211 (RGVSAIRERLGPLVEQGRVRAA), 212–233 (TVGSLASQPLQERAQALGERLR), and 234–255 (ARMEEMGSRTRDRLDEVKEQVA). Residues 80 to 255 (TLMDETMKEL…RLDEVKEQVA (176 aa)) are 8 X 22 AA approximate tandem repeats. Residue methionine 143 is modified to Methionine sulfoxide. Serine 147 carries the post-translational modification Phosphoserine. An LDL and other lipoprotein receptors binding region spans residues 158 to 168 (HLRKLRKRLLR). 162-165 (LRKR) is a heparin binding site. Residues 210 to 290 (AATVGSLASQ…SWFEPLVEDM (81 aa)) are lipid-binding and lipoprotein association. Threonine 212 carries an O-linked (GalNAc...) threonine glycan. A heparin-binding site is contributed by 229 to 236 (GERLRARM). The segment at 266 to 317 (QQISLQAEAFQARLKSWFEPLVEDMQRQWAGLVEKVQAAVGASTAPVPSDNH) is homooligomerization. Residues 278–290 (RLKSWFEPLVEDM) form a specificity for association with VLDL region.

The protein belongs to the apolipoprotein A1/A4/E family. In terms of assembly, homotetramer. May interact with ABCA1; functionally associated with ABCA1 in the biogenesis of HDLs. May interact with APP/A4 amyloid-beta peptide; the interaction is extremely stable in vitro but its physiological significance is unclear. May interact with MAPT. May interact with MAP2. In the cerebrospinal fluid, interacts with secreted SORL1. Interacts with PMEL; this allows the loading of PMEL luminal fragment on ILVs to induce fibril nucleation. In terms of processing, APOE exists as multiple glycosylated and sialylated glycoforms within cells and in plasma. The extent of glycosylation and sialylation are tissue and context specific. Post-translationally, glycated in plasma VLDL. Phosphorylated by FAM20C in the extracellular medium.

Its subcellular location is the secreted. The protein resides in the extracellular space. The protein localises to the extracellular matrix. It is found in the extracellular vesicle. It localises to the endosome. Its subcellular location is the multivesicular body. Functionally, APOE is an apolipoprotein, a protein associating with lipid particles, that mainly functions in lipoprotein-mediated lipid transport between organs via the plasma and interstitial fluids. APOE is a core component of plasma lipoproteins and is involved in their production, conversion and clearance. Apolipoproteins are amphipathic molecules that interact both with lipids of the lipoprotein particle core and the aqueous environment of the plasma. As such, APOE associates with chylomicrons, chylomicron remnants, very low density lipoproteins (VLDL) and intermediate density lipoproteins (IDL) but shows a preferential binding to high-density lipoproteins (HDL). It also binds a wide range of cellular receptors including the LDL receptor/LDLR, the LDL receptor-related proteins LRP1, LRP2 and LRP8 and the very low-density lipoprotein receptor/VLDLR that mediate the cellular uptake of the APOE-containing lipoprotein particles. Finally, APOE also has a heparin-binding activity and binds heparan-sulfate proteoglycans on the surface of cells, a property that supports the capture and the receptor-mediated uptake of APOE-containing lipoproteins by cells. A main function of APOE is to mediate lipoprotein clearance through the uptake of chylomicrons, VLDLs, and HDLs by hepatocytes. APOE is also involved in the biosynthesis by the liver of VLDLs as well as their uptake by peripheral tissues ensuring the delivery of triglycerides and energy storage in muscle, heart and adipose tissues. By participating in the lipoprotein-mediated distribution of lipids among tissues, APOE plays a critical role in plasma and tissues lipid homeostasis. APOE is also involved in two steps of reverse cholesterol transport, the HDLs-mediated transport of cholesterol from peripheral tissues to the liver, and thereby plays an important role in cholesterol homeostasis. First, it is functionally associated with ABCA1 in the biogenesis of HDLs in tissues. Second, it is enriched in circulating HDLs and mediates their uptake by hepatocytes. APOE also plays an important role in lipid transport in the central nervous system, regulating neuron survival and sprouting. The chain is Apolipoprotein E (APOE) from Macaca nemestrina (Pig-tailed macaque).